A 235-amino-acid polypeptide reads, in one-letter code: Octanoyltransferase (235 aa).

Residues 59-235 (PGSSQAVWLL…KKSLTERFGL (177 aa)) form the BPL/LPL catalytic domain. Substrate contacts are provided by residues 101 to 108 (RGGEVTHH), 168 to 170 (SIG), and 181 to 183 (GLS). Cys199 serves as the catalytic Acyl-thioester intermediate.

This sequence belongs to the LipB family.

The protein localises to the cytoplasm. The catalysed reaction is octanoyl-[ACP] + L-lysyl-[protein] = N(6)-octanoyl-L-lysyl-[protein] + holo-[ACP] + H(+). It functions in the pathway protein modification; protein lipoylation via endogenous pathway; protein N(6)-(lipoyl)lysine from octanoyl-[acyl-carrier-protein]: step 1/2. In terms of biological role, catalyzes the transfer of endogenously produced octanoic acid from octanoyl-acyl-carrier-protein onto the lipoyl domains of lipoate-dependent enzymes. Lipoyl-ACP can also act as a substrate although octanoyl-ACP is likely to be the physiological substrate. This chain is Octanoyltransferase, found in Prochlorococcus marinus (strain MIT 9211).